The sequence spans 497 residues: Virion host shutoff protein (497 aa).

Disordered stretches follow at residues 122–142 and 280–373; these read EHDT…PPQD and SVIS…SAEA. Basic and acidic residues predominate over residues 309 to 326; that stretch reads PNERRVISWRRQDDHDYD. Residues 327–344 are compositionally biased toward acidic residues; it reads SSTEDSDQSDSSEEEEEC.

It belongs to the herpesviridae VHS protein family.

It localises to the virion. Its function is as follows. Minor structural protein that acts as an endoribonuclease during lytic infection. Degrades host mRNAs in the cytoplasm by cutting them at preferred sites, including some in regions of translation initiation. This is Virion host shutoff protein from Equine herpesvirus 1 (strain Ab4p) (EHV-1).